Consider the following 311-residue polypeptide: Methionyl-tRNA formyltransferase (311 aa).

S110–P113 is a (6S)-5,6,7,8-tetrahydrofolate binding site.

It belongs to the Fmt family.

It catalyses the reaction L-methionyl-tRNA(fMet) + (6R)-10-formyltetrahydrofolate = N-formyl-L-methionyl-tRNA(fMet) + (6S)-5,6,7,8-tetrahydrofolate + H(+). In terms of biological role, attaches a formyl group to the free amino group of methionyl-tRNA(fMet). The formyl group appears to play a dual role in the initiator identity of N-formylmethionyl-tRNA by promoting its recognition by IF2 and preventing the misappropriation of this tRNA by the elongation apparatus. This Sulfurihydrogenibium sp. (strain YO3AOP1) protein is Methionyl-tRNA formyltransferase.